Reading from the N-terminus, the 157-residue chain is SsrA-binding protein (157 aa).

A disordered region spans residues 132–157 (VHDKRQAQKDKDWAREKDRLFKKAYK). Positions 135-157 (KRQAQKDKDWAREKDRLFKKAYK) are enriched in basic and acidic residues.

The protein belongs to the SmpB family.

Its subcellular location is the cytoplasm. Required for rescue of stalled ribosomes mediated by trans-translation. Binds to transfer-messenger RNA (tmRNA), required for stable association of tmRNA with ribosomes. tmRNA and SmpB together mimic tRNA shape, replacing the anticodon stem-loop with SmpB. tmRNA is encoded by the ssrA gene; the 2 termini fold to resemble tRNA(Ala) and it encodes a 'tag peptide', a short internal open reading frame. During trans-translation Ala-aminoacylated tmRNA acts like a tRNA, entering the A-site of stalled ribosomes, displacing the stalled mRNA. The ribosome then switches to translate the ORF on the tmRNA; the nascent peptide is terminated with the 'tag peptide' encoded by the tmRNA and targeted for degradation. The ribosome is freed to recommence translation, which seems to be the essential function of trans-translation. The sequence is that of SsrA-binding protein from Francisella tularensis subsp. novicida (strain U112).